The sequence spans 2610 residues: E3 ubiquitin-protein ligase HECTD1 (2610 aa).

Positions 246–269 are disordered; it reads TVSGPSSACKPGRSTTGAPSTTAD. The segment covering 258-269 has biased composition (polar residues); that stretch reads RSTTGAPSTTAD. ANK repeat units follow at residues 395 to 424, 426 to 455, 459 to 491, and 579 to 612; these read VGQT…DVNR, QRSS…NPDL, DGKT…PVNK, and ITAT…DIFL. The segment at 489–513 is disordered; that stretch reads VNKGDDKKKKDTNKDEEECNEPKGD. Basic and acidic residues predominate over residues 491–501; it reads KGDDKKKKDTN. Disordered regions lie at residues 627–657 and 707–748; these read LAGP…ELQQ and SSGS…LSAP. Residues serine 631 and serine 640 each carry the phosphoserine modification. Residues 639–657 show a composition bias toward basic and acidic residues; the sequence is ESKPEKEDEPQEDAKELQQ. Over residues 707 to 717 the composition is skewed to low complexity; sequence SSGSPEGGSDS. Basic and acidic residues predominate over residues 718-729; the sequence is SESRSEFLEKLQ. The MIB/HERC2 domain occupies 1266–1338; that stretch reads VRSQVLKYMV…KFDLKLAPGY (73 aa). 2 disordered regions span residues 1343 to 1406 and 1433 to 1483; these read VASP…KTER and ENVP…SMGI. Residues 1348 to 1365 show a composition bias toward polar residues; that stretch reads PVSSTVSGTTQSWSSLVK. 2 stretches are compositionally biased toward low complexity: residues 1373 to 1395 and 1441 to 1458; these read SAAA…ASSS and GSSS…TGSE. Serine 1384 carries the phosphoserine modification. Positions 1469–1479 are enriched in polar residues; that stretch reads SVRTPGESSAI. Serine 1488 bears the Phosphoserine mark. Positions 1496-1515 are disordered; the sequence is ELTNKEAASQRPLSSSASNR. Serine 1567 bears the Phosphoserine mark. Disordered regions lie at residues 1592–1611 and 1674–1757; these read GAQS…VTMS and ELDD…KGGR. Residues 1600–1611 are compositionally biased toward low complexity; it reads TTPGTTSTVTMS. The segment covering 1674–1703 has biased composition (acidic residues); it reads ELDDDEDLPEPDEEDDENEDDNQEDQEYEE. Threonine 1760 bears the Phosphothreonine mark. Serine 1772 carries the post-translational modification Phosphoserine. Positions 1777–1797 are disordered; that stretch reads AFDPRPGRTNVQQTTDLEIPP. The K-box stretch occupies residues 2029-2103; sequence FTFPPDEFTS…AIVWLQNRRE (75 aa). The HECT domain occupies 2151-2610; sequence IHADRKSVLE…ATMEKGFHLN (460 aa). Residues 2297-2318 form a disordered region; that stretch reads HCTESQSEASTEEGHDSLSVGS. Serine 2318 is subject to Phosphoserine. Cysteine 2579 serves as the catalytic Glycyl thioester intermediate.

The protein belongs to the UPL family. K-HECT subfamily. As to quaternary structure, interacts with IGSF1.

The enzyme catalyses S-ubiquitinyl-[E2 ubiquitin-conjugating enzyme]-L-cysteine + [acceptor protein]-L-lysine = [E2 ubiquitin-conjugating enzyme]-L-cysteine + N(6)-ubiquitinyl-[acceptor protein]-L-lysine.. It functions in the pathway protein modification; protein ubiquitination. Functionally, E3 ubiquitin-protein ligase which accepts ubiquitin from an E2 ubiquitin-conjugating enzyme in the form of a thioester and then directly transfers the ubiquitin to targeted substrates. Mediates 'Lys-63'-linked polyubiquitination of HSP90AA1 which leads to its intracellular localization and reduced secretion. Negatively regulating HSP90AA1 secretion in cranial mesenchyme cells may impair their emigration and may be essential for the correct development of the cranial neural folds and neural tube closure. Catalyzes ubiquitination and degradation of ZNF622, an assembly factor for the ribosomal 60S subunit, in hematopoietic cells, thereby promoting hematopoietic stem cell renewal. In Homo sapiens (Human), this protein is E3 ubiquitin-protein ligase HECTD1.